The sequence spans 372 residues: N-methyl-L-tryptophan oxidase (372 aa).

Residue 4 to 34 (DLIIIGSGSVGAAAGYYATRAGLNVLMTDAH) participates in FAD binding. Residue Cys308 is modified to S-8alpha-FAD cysteine.

Belongs to the MSOX/MTOX family. MTOX subfamily. Monomer. FAD serves as cofactor.

The catalysed reaction is N(alpha)-methyl-L-tryptophan + O2 + H2O = L-tryptophan + formaldehyde + H2O2. In terms of biological role, catalyzes the oxidative demethylation of N-methyl-L-tryptophan. In Escherichia coli O127:H6 (strain E2348/69 / EPEC), this protein is N-methyl-L-tryptophan oxidase.